Consider the following 472-residue polypeptide: N-succinylglutamate 5-semialdehyde dehydrogenase 1 (472 aa).

209 to 214 (GGVQAG) provides a ligand contact to NAD(+). Active-site residues include E232 and C266.

This sequence belongs to the aldehyde dehydrogenase family. AstD subfamily.

It catalyses the reaction N-succinyl-L-glutamate 5-semialdehyde + NAD(+) + H2O = N-succinyl-L-glutamate + NADH + 2 H(+). Its pathway is amino-acid degradation; L-arginine degradation via AST pathway; L-glutamate and succinate from L-arginine: step 4/5. In terms of biological role, catalyzes the NAD-dependent reduction of succinylglutamate semialdehyde into succinylglutamate. The chain is N-succinylglutamate 5-semialdehyde dehydrogenase 1 from Caulobacter vibrioides (strain ATCC 19089 / CIP 103742 / CB 15) (Caulobacter crescentus).